Consider the following 316-residue polypeptide: Ribosomal RNA small subunit methyltransferase H (316 aa).

Residues 35–37 (SGH), aspartate 55, phenylalanine 84, aspartate 105, and glutamine 112 contribute to the S-adenosyl-L-methionine site.

Belongs to the methyltransferase superfamily. RsmH family.

Its subcellular location is the cytoplasm. It carries out the reaction cytidine(1402) in 16S rRNA + S-adenosyl-L-methionine = N(4)-methylcytidine(1402) in 16S rRNA + S-adenosyl-L-homocysteine + H(+). In terms of biological role, specifically methylates the N4 position of cytidine in position 1402 (C1402) of 16S rRNA. This Streptococcus pyogenes serotype M4 (strain MGAS10750) protein is Ribosomal RNA small subunit methyltransferase H.